Here is a 43-residue protein sequence, read N- to C-terminus: Subtilosin-A (43 aa).

A propeptide spanning residues 1-8 (MKKAVIVE) is cleaved from the precursor. Residues 9-43 (NKGCATCSIGAACLVDGPIPDFEIAGATGLFGLWG) constitute a cross-link (cyclopeptide (Asn-Gly)). Residues 12–39 (CATCSIGAACLVDGPIPDFEIAGATGLF) constitute a cross-link (2-cysteinyl-D-phenylalanine (Cys-Phe)). Positions 15–36 (CSIGAACLVDGPIPDFEIAGAT) form a cross-link, 2-cysteinyl-D-allo-threonine (Cys-Thr). Positions 21-30 (CLVDGPIPDF) form a cross-link, 2-cysteinyl-L-phenylalanine (Cys-Phe).

The protein belongs to the bacteriocin class V family. Post-translationally, this sactipeptide undergoes unique processing steps that include proteolytic cleavage after Glu-8, and covalent linkage of the alpha-amino of Asn-9 with the carboxyl of Gly-43 to form a cyclopeptide. Thioether cross-links are formed between cysteines and the alpha-carbons of other amino acids, Cys-12 to Phe-39, Cys-15 to Thr-36, and Cys-21 to Phe-30. In forming these cross-links, Thr-36 and Phe-39 are converted to D-amino acids. Propeptide cleavage and cyclopeptide formation only occur after all 3 thioether cross-links are formed.

The protein resides in the secreted. Has bacteriocidal activity against some Gram-positive bacteria such as Listeria, some species of Bacillus and E.faecium. A single mutation (Thr-14-Ile) confers hemolytic activity against rabbit and human blood. The polypeptide is Subtilosin-A (sboA) (Bacillus subtilis (strain 168)).